Reading from the N-terminus, the 382-residue chain is Cytochrome b (382 aa).

4 consecutive transmembrane segments (helical) span residues 28 to 48 (YGFL…FLAS), 72 to 94 (WCFR…LHIL), 107 to 127 (SWIS…IGYV), and 169 to 189 (FFVL…IHIF). The heme b site is built by His78 and His92. Residues His173 and His187 each contribute to the heme b site. His192 provides a ligand contact to a ubiquinone. 4 consecutive transmembrane segments (helical) span residues 214–234 (LLSL…LQSI), 274–294 (IPSK…LFLL), 317–337 (VPMI…CQLP), and 340–360 (IFIL…LFAL).

Belongs to the cytochrome b family. The main subunits of complex b-c1 are: cytochrome b, cytochrome c1 and the Rieske protein. The cofactor is heme b.

Its subcellular location is the mitochondrion inner membrane. Component of the ubiquinol-cytochrome c reductase complex (complex III or cytochrome b-c1 complex) that is part of the mitochondrial respiratory chain. The b-c1 complex mediates electron transfer from ubiquinol to cytochrome c. Contributes to the generation of a proton gradient across the mitochondrial membrane that is then used for ATP synthesis. The sequence is that of Cytochrome b (MT-CYB) from Plasmodium vivax (strain Salvador I).